We begin with the raw amino-acid sequence, 186 residues long: Probable chorismate pyruvate-lyase (186 aa).

Residues Arg-80, Leu-118, and Glu-170 each coordinate substrate.

It belongs to the UbiC family.

It is found in the cytoplasm. It carries out the reaction chorismate = 4-hydroxybenzoate + pyruvate. It participates in cofactor biosynthesis; ubiquinone biosynthesis. Functionally, removes the pyruvyl group from chorismate, with concomitant aromatization of the ring, to provide 4-hydroxybenzoate (4HB) for the ubiquinone pathway. The polypeptide is Probable chorismate pyruvate-lyase (Pseudomonas savastanoi pv. phaseolicola (strain 1448A / Race 6) (Pseudomonas syringae pv. phaseolicola (strain 1448A / Race 6))).